The primary structure comprises 132 residues: Small ribosomal subunit protein uS8c (132 aa).

Belongs to the universal ribosomal protein uS8 family. Part of the 30S ribosomal subunit.

Its subcellular location is the plastid. It localises to the chloroplast. One of the primary rRNA binding proteins, it binds directly to 16S rRNA central domain where it helps coordinate assembly of the platform of the 30S subunit. In Spirogyra maxima (Green alga), this protein is Small ribosomal subunit protein uS8c (rps8).